Reading from the N-terminus, the 592-residue chain is MENSVSEASLYLQDQLDKLRTIIESMLGSSSTLLSMSITPHKSTACLVPGQIDPEATCPACSLDVSHQVSLLVQRYEQLQDMVSGLAASRPSKKAKLQGQDEELLGHVQSAILQVQGDCEKLNITTSNLIEDHRQKQKDIEVLYQGIERLDKEKANREHLEMEIDEKADKSALASKVSRIQFDATTEQLNHMMQELVAKMSGQEQDWQKLLDKLLAEMDSKLDRLELDPLKQMLEDRWKSLRQQLKERPPLYQADEAAAMRRQLLAHFHCLSCDRPLETTVTGQVISVTPIISSMPGHRSVRPYTVFELEQIRQQSRNLKLGSSFPRVDMSQMERSVGRLHSMHSRMLMDMEKVQVHFGGSVKASSQMIRELLHTQCLSHPCYKRGADTADYSYSTVSRRCGGSHTLTYPYRRNRPQHLSPLEEIQIAMKHDEVDILGLDGHIYKGRMDTRLPGILGKDAPGVTKHNKAKLQQLQQLQQLQQLQQLQQLQQAQHARPHAHRQPSLGNMISPPSRPQSAQMIADSKAVPSGQKKDRPVSSEGRLLQSNVSHSSIPTDIASLQGSQQGLNMHIDVPPGEGLEEPTRGPRSTAAH.

A disordered region spans residues 488–592 (QLQQAQHARP…TRGPRSTAAH (105 aa)). The segment covering 544-567 (LQSNVSHSSIPTDIASLQGSQQGL) has biased composition (polar residues).

As to quaternary structure, interacts with AKAP3, ODF2 and TSSK4. Interacts with AKAP4. Expressed in testis. Not detected in heart, brain, kidney, stomach, ovary, liver, lung and uterus.

The protein localises to the nucleus membrane. The protein resides in the nucleus. It is found in the cytoplasm. Its subcellular location is the cell projection. It localises to the cilium. The protein localises to the flagellum. Has an essential role in the formation of sperm flagella and flagellar structure maintainance. It acts as a suppressor of ubiquitination and degradation of proteins involved in flagellar development and motility. This Mus musculus (Mouse) protein is Glutamine-rich protein 2.